The primary structure comprises 322 residues: Arginase (322 aa).

Positions 113, 141, 143, and 145 each coordinate Mn(2+). Substrate-binding positions include 143–147, 154–156, and aspartate 200; these read HADIN and SGN. Mn(2+) contacts are provided by aspartate 247 and aspartate 249. Substrate-binding residues include threonine 261 and glutamate 292.

This sequence belongs to the arginase family. In terms of assembly, homotrimer. Mn(2+) is required as a cofactor.

The enzyme catalyses L-arginine + H2O = urea + L-ornithine. It participates in nitrogen metabolism; urea cycle; L-ornithine and urea from L-arginine: step 1/1. The protein is Arginase (ARG) of Coccidioides immitis (strain RS) (Valley fever fungus).